Consider the following 205-residue polypeptide: Small ribosomal subunit protein uS4 (205 aa).

The S4 RNA-binding domain occupies 94 to 172; it reads SRLDSIVYRM…TTPDYVSFDV (79 aa).

This sequence belongs to the universal ribosomal protein uS4 family. In terms of assembly, part of the 30S ribosomal subunit. Contacts protein S5. The interaction surface between S4 and S5 is involved in control of translational fidelity.

Its function is as follows. One of the primary rRNA binding proteins, it binds directly to 16S rRNA where it nucleates assembly of the body of the 30S subunit. In terms of biological role, with S5 and S12 plays an important role in translational accuracy. This chain is Small ribosomal subunit protein uS4, found in Rickettsia bellii (strain OSU 85-389).